A 121-amino-acid polypeptide reads, in one-letter code: Large ribosomal subunit protein uL14c (121 aa).

This sequence belongs to the universal ribosomal protein uL14 family. In terms of assembly, part of the 50S ribosomal subunit.

The protein resides in the plastid. It is found in the chloroplast. Its function is as follows. Binds to 23S rRNA. The polypeptide is Large ribosomal subunit protein uL14c (Emiliania huxleyi (Coccolithophore)).